We begin with the raw amino-acid sequence, 465 residues long: Uronate isomerase (465 aa).

This sequence belongs to the metallo-dependent hydrolases superfamily. Uronate isomerase family.

It carries out the reaction D-glucuronate = D-fructuronate. The enzyme catalyses aldehydo-D-galacturonate = keto-D-tagaturonate. It functions in the pathway carbohydrate metabolism; pentose and glucuronate interconversion. This Streptococcus equi subsp. zooepidemicus (strain H70) protein is Uronate isomerase.